A 307-amino-acid polypeptide reads, in one-letter code: Acetyl-coenzyme A carboxylase carboxyl transferase subunit beta (307 aa).

In terms of domain architecture, CoA carboxyltransferase N-terminal spans 25–294; it reads VWTKCTSCEQ…PLVVPIEQPK (270 aa). 4 residues coordinate Zn(2+): C29, C32, C48, and C51. Residues 29 to 51 form a C4-type zinc finger; the sequence is CTSCEQVLYHADLERNLEVCPKC.

This sequence belongs to the AccD/PCCB family. In terms of assembly, acetyl-CoA carboxylase is a heterohexamer composed of biotin carboxyl carrier protein (AccB), biotin carboxylase (AccC) and two subunits each of ACCase subunit alpha (AccA) and ACCase subunit beta (AccD). It depends on Zn(2+) as a cofactor.

The protein localises to the cytoplasm. The catalysed reaction is N(6)-carboxybiotinyl-L-lysyl-[protein] + acetyl-CoA = N(6)-biotinyl-L-lysyl-[protein] + malonyl-CoA. Its pathway is lipid metabolism; malonyl-CoA biosynthesis; malonyl-CoA from acetyl-CoA: step 1/1. In terms of biological role, component of the acetyl coenzyme A carboxylase (ACC) complex. Biotin carboxylase (BC) catalyzes the carboxylation of biotin on its carrier protein (BCCP) and then the CO(2) group is transferred by the transcarboxylase to acetyl-CoA to form malonyl-CoA. The sequence is that of Acetyl-coenzyme A carboxylase carboxyl transferase subunit beta from Photobacterium profundum (strain SS9).